Reading from the N-terminus, the 1443-residue chain is Sterol 3-beta-glucosyltransferase ATG26 (1443 aa).

A compositionally biased stretch (low complexity) spans 1–13; the sequence is MATQADDAAASQA. Disordered regions lie at residues 1 to 69 and 88 to 187; these read MATQ…MFMN and NDRF…LTLT. The span at 18–32 shows a compositional bias: basic and acidic residues; that stretch reads GDLKEHVHDELDKIQ. Residues 49-58 are compositionally biased toward acidic residues; that stretch reads DSEDSDDEDN. Over residues 104–117 the composition is skewed to polar residues; sequence QNTRTESIARTSIL. The span at 125–134 shows a compositional bias: basic residues; it reads DKVHRRRKLS. Acidic residues predominate over residues 164–173; it reads EVADEADDEH. The GRAM 1 domain maps to 240 to 284; it reads LKEIFEFDEYEQVIEEYPCWLLQSVLLQGYMYITSKHICFYAYLP. Residues 289-385 form the PH domain; that stretch reads EAVKSGYLSK…WVKSLQRVIF (97 aa). Residues 463–657 form a disordered region; sequence EQVITGDDHD…HGDRHHGIPH (195 aa). A compositionally biased stretch (low complexity) spans 506–525; sequence LAPMSPLSPRSPSQLSPRAS. The segment covering 585–614 has biased composition (polar residues); the sequence is SFLQSSIENPSISTLSPSSYDEPSASQILQ. The segment covering 631–642 has biased composition (basic residues); it reads SRKRDRSGKRTP. One can recognise a GRAM 2 domain in the interval 765 to 870; the sequence is RFRAHFALPE…DCAVTLHQLM (106 aa). Residues 883 to 910 adopt a coiled-coil conformation; the sequence is DQEEQDDEEAAAAMAERDELQEARQDEF. The UDP-alpha-D-glucose site is built by S957, R958, D960, A1265, H1267, H1280, S1283, G1284, T1285, D1304, and Q1305. The segment at 1385–1443 is disordered; the sequence is NAEHGLAEDDDDTEESWTFVGRDEPDPDAVTKKLSDGLAGLGAAGDRPPPLGSQAPTVA. A compositionally biased stretch (basic and acidic residues) spans 1405-1419; sequence GRDEPDPDAVTKKLS.

Belongs to the glycosyltransferase 28 family.

Its subcellular location is the cytoplasm. The protein localises to the preautophagosomal structure membrane. The enzyme catalyses a sterol + UDP-alpha-D-glucose = a sterol 3-beta-D-glucoside + UDP + H(+). It catalyses the reaction ergosterol + UDP-alpha-D-glucose = ergosteryl 3-beta-D-glucoside + UDP + H(+). Functionally, sterol glycosyltransferase responsible for the glycosylation of ergosterol to form ergosterol-glucoside. This Gibberella zeae (strain ATCC MYA-4620 / CBS 123657 / FGSC 9075 / NRRL 31084 / PH-1) (Wheat head blight fungus) protein is Sterol 3-beta-glucosyltransferase ATG26.